A 391-amino-acid polypeptide reads, in one-letter code: GTPase Obg (391 aa).

Residues 1 to 159 form the Obg domain; the sequence is MKFVDEASIL…RDLLLELMLL (159 aa). A disordered region spans residues 127 to 147; the sequence is NTRFKSSVNRTPRQKTNGTPG. A compositionally biased stretch (polar residues) spans 129–145; it reads RFKSSVNRTPRQKTNGT. An OBG-type G domain is found at 160-333; sequence ADVGMLGMPN…LCWDVMTFII (174 aa). Residues 166–173, 191–195, 213–216, 283–286, and 314–316 contribute to the GTP site; these read GMPNAGKS, FTTLV, DIPG, NKID, and SAA. Mg(2+)-binding residues include serine 173 and threonine 193.

The protein belongs to the TRAFAC class OBG-HflX-like GTPase superfamily. OBG GTPase family. As to quaternary structure, monomer. The cofactor is Mg(2+).

It is found in the cytoplasm. An essential GTPase which binds GTP, GDP and possibly (p)ppGpp with moderate affinity, with high nucleotide exchange rates and a fairly low GTP hydrolysis rate. Plays a role in control of the cell cycle, stress response, ribosome biogenesis and in those bacteria that undergo differentiation, in morphogenesis control. This Salmonella arizonae (strain ATCC BAA-731 / CDC346-86 / RSK2980) protein is GTPase Obg.